Consider the following 130-residue polypeptide: Large ribosomal subunit protein bL19c (130 aa).

This sequence belongs to the bacterial ribosomal protein bL19 family.

It localises to the plastid. Its subcellular location is the chloroplast. This chain is Large ribosomal subunit protein bL19c (rpl19), found in Chlorella vulgaris (Green alga).